Here is a 658-residue protein sequence, read N- to C-terminus: UvrABC system protein B (658 aa).

The region spanning 25-414 (KSLKNNNHYQ…LSKKNVAEQI (390 aa)) is the Helicase ATP-binding domain. ATP is bound at residue 38-45 (GVTGSGKT). The Beta-hairpin signature appears at 91-114 (HFDYYQPESYIPRRDLFIEKDSSI). A Helicase C-terminal domain is found at 433-607 (QVQDLFDEIK…ELKLRDDEIR (175 aa)). Residues 623–658 (EKIIKELDKKMRECTKNLDFEEAMRLRDEIAQLRTL) enclose the UVR domain.

It belongs to the UvrB family. As to quaternary structure, forms a heterotetramer with UvrA during the search for lesions. Interacts with UvrC in an incision complex.

It is found in the cytoplasm. In terms of biological role, the UvrABC repair system catalyzes the recognition and processing of DNA lesions. A damage recognition complex composed of 2 UvrA and 2 UvrB subunits scans DNA for abnormalities. Upon binding of the UvrA(2)B(2) complex to a putative damaged site, the DNA wraps around one UvrB monomer. DNA wrap is dependent on ATP binding by UvrB and probably causes local melting of the DNA helix, facilitating insertion of UvrB beta-hairpin between the DNA strands. Then UvrB probes one DNA strand for the presence of a lesion. If a lesion is found the UvrA subunits dissociate and the UvrB-DNA preincision complex is formed. This complex is subsequently bound by UvrC and the second UvrB is released. If no lesion is found, the DNA wraps around the other UvrB subunit that will check the other stand for damage. This Helicobacter pylori (strain ATCC 700392 / 26695) (Campylobacter pylori) protein is UvrABC system protein B.